The primary structure comprises 350 residues: Erythronate-4-phosphate dehydrogenase (350 aa).

Substrate is bound by residues Ser-45 and Thr-66. NAD(+) contacts are provided by residues 124 to 125, Asp-144, 203 to 205, and Asp-226; these read QV and ASR. Arg-205 is an active-site residue. Residue Glu-231 is part of the active site. His-248 functions as the Proton donor in the catalytic mechanism. Gly-251 lines the NAD(+) pocket.

Belongs to the D-isomer specific 2-hydroxyacid dehydrogenase family. PdxB subfamily. Homodimer.

The protein localises to the cytoplasm. The catalysed reaction is 4-phospho-D-erythronate + NAD(+) = (R)-3-hydroxy-2-oxo-4-phosphooxybutanoate + NADH + H(+). The protein operates within cofactor biosynthesis; pyridoxine 5'-phosphate biosynthesis; pyridoxine 5'-phosphate from D-erythrose 4-phosphate: step 2/5. Catalyzes the oxidation of erythronate-4-phosphate to 3-hydroxy-2-oxo-4-phosphonooxybutanoate. In Legionella pneumophila subsp. pneumophila (strain Philadelphia 1 / ATCC 33152 / DSM 7513), this protein is Erythronate-4-phosphate dehydrogenase.